The chain runs to 679 residues: G-protein-signaling modulator 2 (679 aa).

The segment at 22-357 (ASCLELALEG…HLEISREVGD (336 aa)) is important for interaction with NUMA1; INSC and FRMPD1. TPR repeat units lie at residues 24-57 (CLELALEGERLCKSGDCRAGVSFFEAAVQVGTED), 62-95 (SAIYSQLGNAYFYLHDYAKALEYHHHDLTLARTI), 102-135 (AKASGNLGNTLKVLGNFDEAIVCCQRHLDISREL), 142-184 (ARAL…AVDL), 202-235 (GRAFGNLGNTHYLLGNFRDAVIAHEQRLLIAKEF), 242-275 (RRAYSNLGNAYIFLGEFETASEYYKKTLLLARQL), 282-315 (AQSCYSLGNTYTLLQDYEKAIDYHLKHLAIAQEL), and 322-355 (GRACWSLGNAYTALGNHDQAMHFAEKHLEISREV). A phosphoserine mark is found at serine 408 and serine 484. Position 487 is a phosphothreonine (threonine 487). Positions 490–512 (DEGFFDLLRRFQSNRMDDQRCHL) constitute a GoLoco 1 domain. Serine 540 and serine 564 each carry phosphoserine. GoLoco domains are found at residues 543–565 (TDEFLDLLASSQSRRLDDQRASF), 594–616 (DEDFFDILVKCQGSRLDDQRCAP), and 628–650 (DEDFFSLILRSQAKRMDEQRVLL). GDP-binding residues include arginine 608, arginine 613, arginine 642, and arginine 647.

It belongs to the GPSM family. As to quaternary structure, interacts with the dynein-dynactin complex; this interaction is inhibited in a PLK1-dependent manner. Part of a spindle orientation complex at least composed of GNAI1, GPSM2 and NUMA1. Interacts with LLGL2. Interacts (via TPR repeat region) with INSC/inscuteable. Interacts (via TPR repeat region) with NUMA1 (via C-terminus); this interaction is direct, inhibited in a PLK1-dependent manner and promotes spindle pole organization. INSC and NUMA1 compete for the same binding site, but INSC has higher affinity and can displace NUMA1 (in vitro). Interacts with GNAI2. Interacts (via GoLoco domains) with the GDP-bound form of GNAI1 and GNAI3; has much lower affinity for the GTP-bound form. Interaction with GDP-bound GNAI3 strongly enhances the affinity for NUMA1. Interacts (via TPR repeat region) with FRMPD1. INSC and FRMPD1 compete for the same binding site, but INSC has higher affinity and can displace FRMPD1 (in vitro). Interacts (via TPR repeat region) with FRMPD4. Identified in a complex with INSC and F2RL2/Par3. Interacts with TASOR. Detected in brain and liver (at protein level). Detected in brain, spleen, liver and testis, and at lower levels in heart, lung and kidney. Enriched in the ventricular zone of the developing central nervous systems. Expressed in proximal colon, ileum, ovary, Sertoli cells of the testis and granular cells within the cerebellum.

Its subcellular location is the cytoplasm. It localises to the cell cortex. The protein resides in the cytoskeleton. The protein localises to the spindle pole. It is found in the lateral cell membrane. Functionally, plays an important role in mitotic spindle pole organization via its interaction with NUMA1. Required for cortical dynein-dynactin complex recruitment during metaphase. Plays a role in metaphase spindle orientation. Plays an important role in asymmetric cell divisions. Has guanine nucleotide dissociation inhibitor (GDI) activity towards G(i) alpha proteins, such as GNAI1 and GNAI3, and thereby regulates their activity. This Mus musculus (Mouse) protein is G-protein-signaling modulator 2 (Gpsm2).